Reading from the N-terminus, the 193-residue chain is Gas vesicle protein C (193 aa).

5 repeats span residues 19-51 (VAELSLETREFLSVTTAKRQEQAEKQAQELQAF), 52-84 (YKDLQETSQQFLSETAQARIAQAEKQAQELLAF), 85-117 (HKELQETSQQFLSATAQARIAQAEKQAQELLAF), 118-150 (YQEVRETSQQFLSATAQARIAQAEKQAQELLAF), and 151-183 (HKELQETSQQFLSATADARTAQAKEQKESLLKF). The segment at 19–183 (VAELSLETRE…KEQKESLLKF (165 aa)) is 5 X 33 AA tandem repeats.

This sequence belongs to the gas vesicle GvpC family.

The protein resides in the gas vesicle. Its function is as follows. Confers stability, involved in shaping gas vesicles (GV), hollow, gas-filled proteinaceous nanostructures. During planktonic growth they allow positioning of the organism at a favorable depth for light or nutrient acquisition. The ratio of GvpA:GvpC is estimated to be 25:1. GvpC strengthens the GV wall, probably by connecting several GvpA proteins in the same and/or adjacent ribs. Removal of GvpC by SDS reduces the critical collapse pressure (CCP) of stored gas vesicles from 0.23 Mpa to 0.08 MPa. Removal of GvpC by urea reduces CCP of freshly isolated GVs from 0.550 MPa to 0.190 MPa; addition of recombinant GvpC restores CCP to 0.508 MPa. As the turgor pressure in this species is usually 0.35 MPa (plus the water column pressure in its growth environment), this protein is essential for GV formation. In Dolichospermum flosaquae (Anabaena flos-aquae), this protein is Gas vesicle protein C.